A 1073-amino-acid chain; its full sequence is Lon protease homolog, mitochondrial (1073 aa).

The N-terminal 27 residues, 1-27 (MIKASKCNKARALFLVRTSIPRTFIRN), are a transit peptide targeting the mitochondrion. Basic and acidic residues-rich tracts occupy residues 69-107 (FDSK…RKDI) and 113-123 (YDIKEETDSKP). The segment at 69-173 (FDSKKEKQPS…DKEFLSPSDA (105 aa)) is disordered. Low complexity predominate over residues 132-150 (SSKSSISSSSGGANNNNNN). Positions 158 to 167 (DDGSPKDKEF) are enriched in basic and acidic residues. The region spanning 177 to 395 (PPFLAIAMKD…LSLQLLQVEA (219 aa)) is the Lon N-terminal domain. 543-550 (GPPGTGKT) provides a ligand contact to ATP. The segment covering 775 to 785 (SVISDKAKKDA) has biased composition (basic and acidic residues). A disordered region spans residues 775–821 (SVISDKAKKDAGSSSIESNDSNTEAKVSTTTENEKKQEQKQKQDEEI). Polar residues predominate over residues 790–805 (IESNDSNTEAKVSTTT). The span at 806–821 (ENEKKQEQKQKQDEEI) shows a compositional bias: basic and acidic residues. The 189-residue stretch at 856 to 1044 (TLNPGVATGL…SEVFEHLFKG (189 aa)) folds into the Lon proteolytic domain. Catalysis depends on residues S950 and K993.

The protein belongs to the peptidase S16 family. In terms of assembly, homohexamer or homoheptamer. Organized in a ring with a central cavity.

It is found in the mitochondrion matrix. The enzyme catalyses Hydrolysis of proteins in presence of ATP.. In terms of biological role, ATP-dependent serine protease that mediates the selective degradation of misfolded, unassembled or oxidatively damaged polypeptides as well as certain short-lived regulatory proteins in the mitochondrial matrix. May also have a chaperone function in the assembly of inner membrane protein complexes. Participates in the regulation of mitochondrial gene expression and in the maintenance of the integrity of the mitochondrial genome. Binds to mitochondrial DNA in a site-specific manner. The protein is Lon protease homolog, mitochondrial of Candida dubliniensis (strain CD36 / ATCC MYA-646 / CBS 7987 / NCPF 3949 / NRRL Y-17841) (Yeast).